The chain runs to 286 residues: Bifunctional protein FolD (286 aa).

Residues 165-167 (GRS), Ser-190, and Val-231 contribute to the NADP(+) site.

Belongs to the tetrahydrofolate dehydrogenase/cyclohydrolase family. As to quaternary structure, homodimer.

It carries out the reaction (6R)-5,10-methylene-5,6,7,8-tetrahydrofolate + NADP(+) = (6R)-5,10-methenyltetrahydrofolate + NADPH. The catalysed reaction is (6R)-5,10-methenyltetrahydrofolate + H2O = (6R)-10-formyltetrahydrofolate + H(+). Its pathway is one-carbon metabolism; tetrahydrofolate interconversion. Its function is as follows. Catalyzes the oxidation of 5,10-methylenetetrahydrofolate to 5,10-methenyltetrahydrofolate and then the hydrolysis of 5,10-methenyltetrahydrofolate to 10-formyltetrahydrofolate. The protein is Bifunctional protein FolD of Bacillus cereus (strain G9842).